Here is a 115-residue protein sequence, read N- to C-terminus: Large ribosomal subunit protein bL19 (115 aa).

It belongs to the bacterial ribosomal protein bL19 family.

Its function is as follows. This protein is located at the 30S-50S ribosomal subunit interface and may play a role in the structure and function of the aminoacyl-tRNA binding site. This is Large ribosomal subunit protein bL19 from Hydrogenovibrio crunogenus (strain DSM 25203 / XCL-2) (Thiomicrospira crunogena).